We begin with the raw amino-acid sequence, 101 residues long: Small ribosomal subunit protein uS14 (101 aa).

This sequence belongs to the universal ribosomal protein uS14 family. As to quaternary structure, part of the 30S ribosomal subunit. Contacts proteins S3 and S10.

Its function is as follows. Binds 16S rRNA, required for the assembly of 30S particles and may also be responsible for determining the conformation of the 16S rRNA at the A site. In Xylella fastidiosa (strain M23), this protein is Small ribosomal subunit protein uS14.